The chain runs to 534 residues: Phenylalanine N-monooxygenase CYP79D16 (534 aa).

A signal peptide spans 1–21 (MEANVGFLTLCLAITLVRFLM). Residue Cys472 participates in heme binding. N-linked (GlcNAc...) asparagine glycosylation occurs at Asn500.

It belongs to the cytochrome P450 family. Heme serves as cofactor. As to expression, expressed in seedlings.

It catalyses the reaction L-phenylalanine + 2 reduced [NADPH--hemoprotein reductase] + 2 O2 = (E)-phenylacetaldehyde oxime + 2 oxidized [NADPH--hemoprotein reductase] + CO2 + 3 H2O + 2 H(+). Functionally, involved in L-phenylalanine-derived cyanogenic glycoside biosynthesis, including prunasin and amygdalin defensive agents. Catalyzes the conversion of L-phenylalanine (Phe) into phenylacetaldoxime (PAOx). Cannot use tyrosine (Tyr), tryptophan (Trp) and valine (Val) as substrates. This is Phenylalanine N-monooxygenase CYP79D16 from Prunus mume (Japanese apricot).